The sequence spans 283 residues: Small ribosomal subunit protein uS2B (283 aa).

A disordered region spans residues 254 to 283 (GQVGQSAWDEEGDWNTTGAAQTSDWANTVA). Positions 267 to 283 (WNTTGAAQTSDWANTVA) are enriched in polar residues.

This sequence belongs to the universal ribosomal protein uS2 family. In terms of assembly, component of the small ribosomal subunit. Mature ribosomes consist of a small (40S) and a large (60S) subunit. The 40S subunit contains about 33 different proteins and 1 molecule of RNA (18S). The 60S subunit contains about 49 different proteins and 3 molecules of RNA (25S, 5.8S and 5S). Interacts with rps21.

Its subcellular location is the cytoplasm. Required for the assembly and/or stability of the 40S ribosomal subunit. Required for the processing of the 20S rRNA-precursor to mature 18S rRNA in a late step of the maturation of 40S ribosomal subunits. The protein is Small ribosomal subunit protein uS2B (rps0b) of Schizosaccharomyces japonicus (strain yFS275 / FY16936) (Fission yeast).